A 907-amino-acid polypeptide reads, in one-letter code: Eukaryotic translation initiation factor 4 gamma 2 (907 aa).

Residue Met-1 is modified to N-acetylmethionine. The interval 1–71 (MESAIAEGGA…SAANNSANEK (71 aa)) is disordered. Ser-11 is subject to Phosphoserine. Residues 78–308 (FRKVRGILNK…QDTVELREHH (231 aa)) enclose the MIF4G domain. Thr-89 is modified (phosphothreonine). At Arg-360 the chain carries Omega-N-methylarginine. Position 395 is a phosphoserine (Ser-395). Residue Lys-431 is modified to N6-methyllysine. At Ser-443 the chain carries Phosphoserine. Positions 498–541 (PPSAQPPRTQTPPLGQTPQLGLKTNPPLIQEKPAKTSKKPPPSK) are disordered. Residues 503–516 (PPRTQTPPLGQTPQ) show a composition bias toward polar residues. Arg-505 is modified (omega-N-methylarginine). Thr-508 and Thr-514 each carry phosphothreonine. Positions 543–666 (ELLKLTETVV…SISELAQPLE (124 aa)) constitute an MI domain. Residue Lys-575 forms a Glycyl lysine isopeptide (Lys-Gly) (interchain with G-Cter in SUMO2) linkage. In terms of domain architecture, W2 spans 720-904 (EGKGLSFLFP…ETAEEEESEE (185 aa)). Ser-902 bears the Phosphoserine mark.

This sequence belongs to the eukaryotic initiation factor 4G family. In terms of assembly, interacts with the serine/threonine protein kinases MKNK1 and MKNK2. Binds EIF4A and EIF3. Interacts with MIF4GD. Interacts with DAZAP2. In terms of processing, phosphorylation; hyperphosphorylated during mitosis.

Functionally, appears to play a role in the switch from cap-dependent to IRES-mediated translation during mitosis, apoptosis and viral infection. Cleaved by some caspases and viral proteases. The protein is Eukaryotic translation initiation factor 4 gamma 2 of Oryctolagus cuniculus (Rabbit).